The chain runs to 125 residues: Large ribosomal subunit protein bL19 (125 aa).

Belongs to the bacterial ribosomal protein bL19 family.

This protein is located at the 30S-50S ribosomal subunit interface and may play a role in the structure and function of the aminoacyl-tRNA binding site. The protein is Large ribosomal subunit protein bL19 of Ehrlichia ruminantium (strain Gardel).